The following is an 844-amino-acid chain: Cell division cycle 5-like protein (844 aa).

HTH myb-type domains follow at residues 2–57 (RIMI…DPSI) and 58–107 (KKTE…DAAC). 2 consecutive DNA-binding regions (H-T-H motif) follow at residues 30–53 (WARI…YEWL) and 81–103 (WRTI…EKLL). The segment covering 113–126 (YDAADDPRKLRPGE) has biased composition (basic and acidic residues). The tract at residues 113–147 (YDAADDPRKLRPGEIDPNPEAKPARPDPVDMDEDE) is disordered. The stretch at 145 to 189 (EDEKEMLSEARARLANTRGKKAKRKAREKQLEEARRLASLQKRRE) forms a coiled coil. Thr343 carries the post-translational modification Phosphothreonine. The disordered stretch occupies residues 379-514 (QTPLLGGENP…PEEKIEEDMS (136 aa)). 2 stretches are compositionally biased toward polar residues: residues 406–416 (QTPNPMLTPSM) and 433–442 (RDGSSFSMTP). Residues 446-475 (PFRDELHINEDMDMHESAKLERQRREEARR) are compositionally biased toward basic and acidic residues. The segment covering 500–513 (EESEEPEEKIEEDM) has biased composition (acidic residues). Residues 685 to 723 (GNADKVAAFQEEMENVRKKMEEDEKKAEHMKAKYKTYTK) adopt a coiled-coil conformation.

Belongs to the CEF1 family. As to quaternary structure, component of the multiprotein assembly MOS4-associated complex (MAC) at least composed of MOS4, CDC5, PRL1 and PRP19. Interacts with PRL1, MOS4 and PRP19A. Associated with the spliceosome. As to expression, expressed extensively in shoot and root meristems.

It is found in the nucleus. In terms of biological role, component of the MAC complex that probably regulates defense responses through transcriptional control and thereby is essential for plant innate immunity. Possesses a sequence specific DNA sequence 'CTCAGCG' binding activity. Involved in mRNA splicing and cell cycle control. May also play a role in the response to DNA damage. This chain is Cell division cycle 5-like protein (CDC5), found in Arabidopsis thaliana (Mouse-ear cress).